A 108-amino-acid chain; its full sequence is Protein SMALL AUXIN UP-REGULATED RNA 8 (108 aa).

It belongs to the ARG7 family. In terms of tissue distribution, expressed in seedlings, leaves and flowers.

Its subcellular location is the cell membrane. Functionally, provide a mechanistic link between auxin and plasma membrane H(+)-ATPases (PM H(+)-ATPases, e.g. AHA1 and AHA2), and triggers PM H(+)-ATPases activity by promoting phosphorylation of their C-terminal autoinhibitory domain as a result of PP2C-D subfamily of type 2C phosphatases inhibition, thus leading to the acidification of the apoplast and the facilitation of solutes and water uptake to drive cell expansion. Triggers plant growth probably by promoting cell elongation. Regulates branch angles and bending. This Arabidopsis thaliana (Mouse-ear cress) protein is Protein SMALL AUXIN UP-REGULATED RNA 8.